The sequence spans 324 residues: Olfactory receptor 5T17 (324 aa).

The Extracellular portion of the chain corresponds to 1–37 (MPRTPSYTNTKTTQVNNVTEITVFILLGFTDDVDMNI). A glycan (N-linked (GlcNAc...) asparagine) is linked at Asn-17. A helical membrane pass occupies residues 38–58 (FLFILFLAIYVVTLIGNLGLV). Topologically, residues 59-66 (VLVIEDSR) are cytoplasmic. A helical membrane pass occupies residues 67 to 87 (LHNPMYYFLTVLSSLDACFSS). At 88 to 111 (VLTPKMLVNFLSKNKSISFAGCAT) the chain is on the extracellular side. Residue Asn-101 is glycosylated (N-linked (GlcNAc...) asparagine). A disulfide bond links Cys-109 and Cys-201. A helical membrane pass occupies residues 112–132 (QMLLFVTFGTTECFLLAAMAY). The Cytoplasmic segment spans residues 133–145 (DRYLAIYSPLLYA). A helical membrane pass occupies residues 146 to 166 (VRMSPRVYVPLIIASYTGGIL). Residues 167–208 (HATIHTVATFSLSFCGSNEIRHVFCDIPPLLALSCSDTHLNQ) lie on the Extracellular side of the membrane. The chain crosses the membrane as a helical span at residues 209-229 (LLLFYCAGSIELITILIVLVS). Over 230–249 (YGFVLLAILKINSAEGRRKI) the chain is Cytoplasmic. Residues 250-270 (FSTCGAHLTGVSIFHGTILFM) traverse the membrane as a helical segment. Residues 271-283 (YVRPSSNYTLEQD) lie on the Extracellular side of the membrane. A glycan (N-linked (GlcNAc...) asparagine) is linked at Asn-277. Residues 284–304 (MVVSTFYTIVIPMLNPIIYSL) traverse the membrane as a helical segment. The Cytoplasmic portion of the chain corresponds to 305–324 (RNKDVKEAMRKLLKRKLVHE).

The protein belongs to the G-protein coupled receptor 1 family.

It localises to the cell membrane. Functionally, potential odorant receptor. The chain is Olfactory receptor 5T17 from Mus musculus (Mouse).